Consider the following 912-residue polypeptide: Nonsense-mediated mRNA decay factor SMG8 (912 aa).

The disordered stretch occupies residues 565 to 630 (EHSNRTPDAS…GEDEDETLEQ (66 aa)). Over residues 570-602 (TPDASTHPPMTNENSPHLSGSQKSQDSASNLTF) the composition is skewed to polar residues. The segment covering 604–614 (MDEKRDEENKS) has biased composition (basic and acidic residues).

This sequence belongs to the SMG8 family.

Functionally, involved in nonsense-mediated decay (NMD) of mRNAs containing premature stop codons. Probable component of kinase complex containing SMG1 and recruited to stalled ribosomes. This Culex quinquefasciatus (Southern house mosquito) protein is Nonsense-mediated mRNA decay factor SMG8.